The following is a 229-amino-acid chain: Large ribosomal subunit protein uL1 (229 aa).

The protein belongs to the universal ribosomal protein uL1 family. As to quaternary structure, part of the 50S ribosomal subunit.

Functionally, binds directly to 23S rRNA. The L1 stalk is quite mobile in the ribosome, and is involved in E site tRNA release. Its function is as follows. Protein L1 is also a translational repressor protein, it controls the translation of the L11 operon by binding to its mRNA. In Streptococcus pyogenes serotype M1, this protein is Large ribosomal subunit protein uL1.